The chain runs to 602 residues: Phosphoenolpyruvate carboxykinase [GTP] (602 aa).

Residues Arg-89 and Tyr-211 to Gly-213 each bind substrate. Mn(2+)-binding residues include Lys-220 and His-239. Ser-260 is a binding site for substrate. Gly-261–Ser-266 serves as a coordination point for GTP. Ser-262 is a catalytic residue. Asp-277 serves as a coordination point for Mn(2+). A substrate-binding site is contributed by Asn-367–Arg-369. GTP-binding residues include Arg-369 and Arg-400.

This sequence belongs to the phosphoenolpyruvate carboxykinase [GTP] family. The cofactor is Mn(2+).

The protein resides in the cytoplasm. The enzyme catalyses oxaloacetate + GTP = phosphoenolpyruvate + GDP + CO2. It functions in the pathway carbohydrate biosynthesis; gluconeogenesis. Functionally, catalyzes the conversion of oxaloacetate (OAA) to phosphoenolpyruvate (PEP), the rate-limiting step in the metabolic pathway that produces glucose from lactate and other precursors derived from the citric acid cycle. In Sulfurisphaera tokodaii (strain DSM 16993 / JCM 10545 / NBRC 100140 / 7) (Sulfolobus tokodaii), this protein is Phosphoenolpyruvate carboxykinase [GTP].